A 206-amino-acid polypeptide reads, in one-letter code: Small ribosomal subunit protein eS8 (206 aa).

The tract at residues methionine 1–lysine 37 is disordered.

The protein belongs to the eukaryotic ribosomal protein eS8 family. Component of the small ribosomal subunit. Mature ribosomes consist of a small (40S) and a large (60S) subunit. The 40S subunit contains about 32 different proteins and 1 molecule of RNA (18S). The 60S subunit contains 45 different proteins and 3 molecules of RNA (25S, 5.8S and 5S).

Its subcellular location is the cytoplasm. Component of the ribosome, a large ribonucleoprotein complex responsible for the synthesis of proteins in the cell. The small ribosomal subunit (SSU) binds messenger RNAs (mRNAs) and translates the encoded message by selecting cognate aminoacyl-transfer RNA (tRNA) molecules. The large subunit (LSU) contains the ribosomal catalytic site termed the peptidyl transferase center (PTC), which catalyzes the formation of peptide bonds, thereby polymerizing the amino acids delivered by tRNAs into a polypeptide chain. The nascent polypeptides leave the ribosome through a tunnel in the LSU and interact with protein factors that function in enzymatic processing, targeting, and the membrane insertion of nascent chains at the exit of the ribosomal tunnel. This is Small ribosomal subunit protein eS8 (RPS8A) from Candida albicans (strain SC5314 / ATCC MYA-2876) (Yeast).